Consider the following 407-residue polypeptide: Peptidase T (407 aa).

Histidine 81 lines the Zn(2+) pocket. Aspartate 83 is an active-site residue. Position 142 (aspartate 142) interacts with Zn(2+). The Proton acceptor role is filled by glutamate 176. Zn(2+) is bound by residues glutamate 177, aspartate 199, and histidine 381.

Belongs to the peptidase M20B family. It depends on Zn(2+) as a cofactor.

It localises to the cytoplasm. The enzyme catalyses Release of the N-terminal residue from a tripeptide.. Functionally, cleaves the N-terminal amino acid of tripeptides. The sequence is that of Peptidase T from Streptococcus sanguinis (strain SK36).